We begin with the raw amino-acid sequence, 464 residues long: Ribulose bisphosphate carboxylase/oxygenase activase A, chloroplastic (464 aa).

The transit peptide at 1–48 (MAAAFSSTVGAPASTPTNFLGKKLKKQVTSAVNYHGKSSKANRFTVMA) directs the protein to the chloroplast. 155 to 162 (GGKGQGKS) provides a ligand contact to ATP.

The protein belongs to the RuBisCO activase family.

The protein resides in the plastid. It localises to the chloroplast stroma. Its function is as follows. Activation of RuBisCO (ribulose-1,5-bisphosphate carboxylase/oxygenase; EC 4.1.1.39) involves the ATP-dependent carboxylation of the epsilon-amino group of lysine leading to a carbamate structure. This chain is Ribulose bisphosphate carboxylase/oxygenase activase A, chloroplastic (RCAA), found in Hordeum vulgare (Barley).